The primary structure comprises 419 residues: UDP-N-acetylglucosamine 1-carboxyvinyltransferase (419 aa).

22-23 (KN) provides a ligand contact to phosphoenolpyruvate. Position 93 (arginine 93) interacts with UDP-N-acetyl-alpha-D-glucosamine. Cysteine 117 serves as the catalytic Proton donor. Cysteine 117 bears the 2-(S-cysteinyl)pyruvic acid O-phosphothioketal mark. Residues aspartate 307 and isoleucine 329 each contribute to the UDP-N-acetyl-alpha-D-glucosamine site.

It belongs to the EPSP synthase family. MurA subfamily.

It localises to the cytoplasm. The enzyme catalyses phosphoenolpyruvate + UDP-N-acetyl-alpha-D-glucosamine = UDP-N-acetyl-3-O-(1-carboxyvinyl)-alpha-D-glucosamine + phosphate. The protein operates within cell wall biogenesis; peptidoglycan biosynthesis. Cell wall formation. Adds enolpyruvyl to UDP-N-acetylglucosamine. The protein is UDP-N-acetylglucosamine 1-carboxyvinyltransferase of Shewanella putrefaciens (strain CN-32 / ATCC BAA-453).